The sequence spans 536 residues: Heparanase-like protein 3 (536 aa).

The first 24 residues, 1 to 24 (MAYRQILAIVLFLCVFQFLDCTVS), serve as a signal peptide directing secretion. N-linked (GlcNAc...) asparagine glycosylation is found at N30, N122, N176, and N191. The active-site Proton donor is the E202. 2 N-linked (GlcNAc...) asparagine glycosylation sites follow: N265 and N308. The Nucleophile role is filled by E319. N370, N427, N438, and N510 each carry an N-linked (GlcNAc...) asparagine glycan.

Belongs to the glycosyl hydrolase 79 family.

It localises to the lysosome membrane. Its subcellular location is the secreted. Its function is as follows. Endoglycosidase which is a cell surface and extracellular matrix-degrading enzyme. Cleaves heparan sulfate proteoglycans (HSPGs) into heparan sulfate side chains and core proteoglycans. In Arabidopsis thaliana (Mouse-ear cress), this protein is Heparanase-like protein 3.